Consider the following 335-residue polypeptide: (+)-caryolan-1-ol synthase (335 aa).

Residues Asp-83, Asp-87, Asn-220, Ser-224, and Glu-228 each coordinate Mg(2+). The DDXXD motif signature appears at 83 to 87 (DDEFD). The short motif at 220–228 (NDICSFEKE) is the NSE/DTE motif element.

The protein belongs to the terpene synthase family. Requires Mg(2+) as cofactor. Mn(2+) serves as cofactor.

The enzyme catalyses (2E,6E)-farnesyl diphosphate = (+)-(E)-beta-caryophyllene + diphosphate. The catalysed reaction is (+)-(E)-beta-caryophyllene + H2O = (+)-caryolan-1-ol. The protein operates within secondary metabolite biosynthesis; terpenoid biosynthesis. Sesquiterpene cyclase that first catalyzes the cyclization of farnesyl diphosphate (FPP) to the bicyclic sesquiterpene (+)-beta-caryophyllene intermediate, and then its conversion to (+)-caryolan-1-ol via a second cyclization and the addition of a water molecule. This Streptomyces griseus subsp. griseus (strain JCM 4626 / CBS 651.72 / NBRC 13350 / KCC S-0626 / ISP 5235) protein is (+)-caryolan-1-ol synthase (gcoA).